The chain runs to 124 residues: Small ribosomal subunit protein uS13 (124 aa).

Residues 87 to 124 (GSYRGNRHRKRLPVRGQRTKTNSRTRKGKRRTVGSKTK) form a disordered region. The span at 91 to 124 (GNRHRKRLPVRGQRTKTNSRTRKGKRRTVGSKTK) shows a compositional bias: basic residues.

Belongs to the universal ribosomal protein uS13 family. In terms of assembly, part of the 30S ribosomal subunit. Forms a loose heterodimer with protein S19. Forms two bridges to the 50S subunit in the 70S ribosome.

Functionally, located at the top of the head of the 30S subunit, it contacts several helices of the 16S rRNA. In the 70S ribosome it contacts the 23S rRNA (bridge B1a) and protein L5 of the 50S subunit (bridge B1b), connecting the 2 subunits; these bridges are implicated in subunit movement. Contacts the tRNAs in the A and P-sites. The polypeptide is Small ribosomal subunit protein uS13 (Elusimicrobium minutum (strain Pei191)).